Reading from the N-terminus, the 87-residue chain is Small ribosomal subunit protein eS21 (87 aa).

It belongs to the eukaryotic ribosomal protein eS21 family. In terms of assembly, component of the small ribosomal subunit. Mature ribosomes consist of a small (40S) and a large (60S) subunit. The 40S subunit contains about 33 different proteins and 1 molecule of RNA (18S). The 60S subunit contains about 49 different proteins and 3 molecules of RNA (25S, 5.8S and 5S).

The protein localises to the cytoplasm. Its function is as follows. Required for the processing of the 20S rRNA-precursor to mature 18S rRNA in a late step of the maturation of 40S ribosomal subunits. Has a physiological role leading to 18S rRNA stability. This is Small ribosomal subunit protein eS21 (RPS21) from Candida glabrata (strain ATCC 2001 / BCRC 20586 / JCM 3761 / NBRC 0622 / NRRL Y-65 / CBS 138) (Yeast).